We begin with the raw amino-acid sequence, 644 residues long: Phosphatidylinositol polyphosphate 5-phosphatase type IV (644 aa).

Residues M1 to P193 are disordered. 8 repeat units span residues P10 to P13, P15 to P18, P28 to P31, P39 to A42, P55 to P58, P69 to A71, P72 to P74, and P75 to P78. The segment at P10–P242 is 13 X 4 AA repeats of P-X-X-P. Basic and acidic residues predominate over residues P78–G90. A Phosphoserine modification is found at S99. Residues N107–S118 are compositionally biased toward polar residues. Repeat 9 spans residues P121 to P124. Over residues G152–G163 the composition is skewed to low complexity. Tandem repeats lie at residues P169–P172, P183–L185, P190–P193, and P236–P239. S241 and S256 each carry phosphoserine. C641 carries the cysteine methyl ester modification. C641 carries S-farnesyl cysteine lipidation. A propeptide spans S642–S644 (removed in mature form).

The protein belongs to the inositol 1,4,5-trisphosphate 5-phosphatase type IV family. As to quaternary structure, interacts (when prenylated) with PDE6D; this is important for normal location in cilia. Detected in brain, heart, pancreas, testis and spleen.

The protein localises to the cytoplasm. Its subcellular location is the cytoskeleton. The protein resides in the cilium axoneme. It localises to the golgi apparatus. It is found in the golgi stack membrane. The protein localises to the cell membrane. Its subcellular location is the cell projection. The protein resides in the ruffle. It localises to the nucleus. The enzyme catalyses a 1,2-diacyl-sn-glycero-3-phospho-(1D-myo-inositol-4,5-bisphosphate) + H2O = a 1,2-diacyl-sn-glycero-3-phospho-(1D-myo-inositol 4-phosphate) + phosphate. It catalyses the reaction a 1,2-diacyl-sn-glycero-3-phospho-(1D-myo-inositol-3,4,5-trisphosphate) + H2O = a 1,2-diacyl-sn-glycero-3-phospho-(1D-myo-inositol-3,4-bisphosphate) + phosphate. The catalysed reaction is a 1,2-diacyl-sn-glycero-3-phospho-(1D-myo-inositol-3,5-bisphosphate) + H2O = a 1,2-diacyl-sn-glycero-3-phospho-(1D-myo-inositol-3-phosphate) + phosphate. Its activity is regulated as follows. Active in the presence of octyl-glucoside or Triton X-100, but completely inhibited by CTAB. Functionally, phosphatidylinositol (PtdIns) phosphatase that specifically hydrolyzes the 5-phosphate of phosphatidylinositol-3,4,5-trisphosphate (PtdIns(3,4,5)P3), phosphatidylinositol 4,5-bisphosphate (PtdIns(4,5)P2) and phosphatidylinositol 3,5-bisphosphate (PtdIns(3,5)P2). Specific for lipid substrates, inactive towards water soluble inositol phosphates. Plays an essential role in the primary cilium by controlling ciliary growth and phosphoinositide 3-kinase (PI3K) signaling and stability. This is Phosphatidylinositol polyphosphate 5-phosphatase type IV (INPP5E) from Homo sapiens (Human).